The sequence spans 106 residues: Cytochrome c2 (106 aa).

Cys-19, Cys-22, His-23, and Met-84 together coordinate heme c.

This sequence belongs to the cytochrome c family. In terms of processing, binds 1 heme c group covalently per subunit.

In Rhodopila globiformis (Rhodopseudomonas globiformis), this protein is Cytochrome c2.